A 158-amino-acid polypeptide reads, in one-letter code: 6,7-dimethyl-8-ribityllumazine synthase (158 aa).

Residues W28, 59–61 (TVE), and 81–83 (VVV) each bind 5-amino-6-(D-ribitylamino)uracil. 86-87 (DT) serves as a coordination point for (2S)-2-hydroxy-3-oxobutyl phosphate. H89 functions as the Proton donor in the catalytic mechanism. F114 is a binding site for 5-amino-6-(D-ribitylamino)uracil. R128 lines the (2S)-2-hydroxy-3-oxobutyl phosphate pocket.

Belongs to the DMRL synthase family.

The enzyme catalyses (2S)-2-hydroxy-3-oxobutyl phosphate + 5-amino-6-(D-ribitylamino)uracil = 6,7-dimethyl-8-(1-D-ribityl)lumazine + phosphate + 2 H2O + H(+). Its pathway is cofactor biosynthesis; riboflavin biosynthesis; riboflavin from 2-hydroxy-3-oxobutyl phosphate and 5-amino-6-(D-ribitylamino)uracil: step 1/2. Functionally, catalyzes the formation of 6,7-dimethyl-8-ribityllumazine by condensation of 5-amino-6-(D-ribitylamino)uracil with 3,4-dihydroxy-2-butanone 4-phosphate. This is the penultimate step in the biosynthesis of riboflavin. In Micrococcus luteus (strain ATCC 4698 / DSM 20030 / JCM 1464 / CCM 169 / CCUG 5858 / IAM 1056 / NBRC 3333 / NCIMB 9278 / NCTC 2665 / VKM Ac-2230) (Micrococcus lysodeikticus), this protein is 6,7-dimethyl-8-ribityllumazine synthase.